A 338-amino-acid chain; its full sequence is MATQHPIGKKTACVVGGTGFVASLLVKLLLQKGYAVNTTVRDPDNQKKVSHLLELQELGDLKIFRADLTDELSFEAPIAGCDFVFHVATPVHFASEDPENDMIKPAIQGVVNVMKACTRAKSVKRVILTSSAAAVTINQLDGTGLVVDEKNWTDIEFLTSAKPPTWGYPASKTLAEKAAWKFAEENNIDLITVIPTLMAGSSLTSDVPSSIGLAMSLITGNEFLINGMKGMQMLSGSVSIAHVEDVCQAHIFVAEKESASGRYICCAANTSVPELAKFLSKRYPQYKVPTDFGDFPPKSKLIISSEKLVKEGFSFKYGIEEIYDESVEYFKAKGLLQN.

NADP(+) is bound by residues 18–21 (TGFV), Lys48, 87–90 (VATP), and Tyr168.

This sequence belongs to the NAD(P)-dependent epimerase/dehydratase family. Dihydroflavonol-4-reductase subfamily. In terms of tissue distribution, expressed in leaves and grape berries.

It carries out the reaction a (2S,3R)-flavan-3-ol + 2 NADP(+) = an anthocyanidin with a 3-hydroxy group + 2 NADPH + 2 H(+). The enzyme catalyses a (2S,3S)-flavan-3-ol + 2 NADP(+) = an anthocyanidin with a 3-hydroxy group + 2 NADPH + 2 H(+). It functions in the pathway secondary metabolite biosynthesis; flavonoid biosynthesis. In terms of biological role, produces the terminal flavan-3-ol monomers required for the formation of proanthocyanidins or condensed tannins in leaves and flowers, as well as in the skin and seeds of developing berries. Behaves as a reductase and as a C-3 epimerase. Catalyzes the double reduction of anthocyanidins, producing a mixture of (2S,3S)- and (2S,3R)-flavan-3-ols. The enzyme catalyzes sequential hydride transfers to C-2 and C-4, respectively and epimerization at C-3 is achieved by tautomerization that occurs between the two hydride transfers. Converts cyanidin, pelargonidin and delphinidin into catechin and epicatechin, afzelechin and epiafzelechin, and gallocatechin and epigallocatechin respectively. This is Anthocyanidin reductase ((2S)-flavan-3-ol-forming) from Vitis vinifera (Grape).